The chain runs to 331 residues: Vitamin B12 import system permease protein BtuC (331 aa).

The next 7 helical transmembrane spans lie at 21–43 (LALL…ERWI), 63–85 (PRTL…MQAV), 90–112 (LAEP…TVLL), 116–138 (LLPV…FLLL), 151–173 (LLIG…YFST), 193–210 (WRHG…LWLS), and 239–261 (VLVL…IAFI).

It belongs to the binding-protein-dependent transport system permease family. FecCD subfamily. In terms of assembly, the complex is composed of two ATP-binding proteins (BtuD), two transmembrane proteins (BtuC) and a solute-binding protein (BtuF).

It localises to the cell inner membrane. In terms of biological role, part of the ABC transporter complex BtuCDF involved in vitamin B12 import. Involved in the translocation of the substrate across the membrane. This is Vitamin B12 import system permease protein BtuC from Pectobacterium atrosepticum (strain SCRI 1043 / ATCC BAA-672) (Erwinia carotovora subsp. atroseptica).